The primary structure comprises 64 residues: Large ribosomal subunit protein bL35 (64 aa).

It belongs to the bacterial ribosomal protein bL35 family.

This is Large ribosomal subunit protein bL35 from Shewanella frigidimarina (strain NCIMB 400).